Consider the following 86-residue polypeptide: Large ribosomal subunit protein bL31B (86 aa).

Belongs to the bacterial ribosomal protein bL31 family. Type B subfamily. Part of the 50S ribosomal subunit.

This Streptococcus equi subsp. zooepidemicus (strain H70) protein is Large ribosomal subunit protein bL31B.